The sequence spans 485 residues: Glutamate--tRNA ligase (485 aa).

Residues 11–21 (PSPTGHLHIGG) carry the 'HIGH' region motif. Positions 252-256 (KMSKR) match the 'KMSKS' region motif. Residue Lys-255 coordinates ATP.

This sequence belongs to the class-I aminoacyl-tRNA synthetase family. Glutamate--tRNA ligase type 1 subfamily. In terms of assembly, monomer.

The protein resides in the cytoplasm. The enzyme catalyses tRNA(Glu) + L-glutamate + ATP = L-glutamyl-tRNA(Glu) + AMP + diphosphate. Catalyzes the attachment of glutamate to tRNA(Glu) in a two-step reaction: glutamate is first activated by ATP to form Glu-AMP and then transferred to the acceptor end of tRNA(Glu). The chain is Glutamate--tRNA ligase from Halalkalibacterium halodurans (strain ATCC BAA-125 / DSM 18197 / FERM 7344 / JCM 9153 / C-125) (Bacillus halodurans).